The chain runs to 283 residues: Probable 3-deoxy-manno-octulosonic acid transferase (283 aa).

Its subcellular location is the cytoplasm. It catalyses the reaction an alpha-Kdo-(2-&gt;4)-alpha-Kdo-(2-&gt;6)-lipid IVA + CMP-3-deoxy-beta-D-manno-octulosonate = an alpha-Kdo-(2-&gt;4)-alpha-Kdo-(2-&gt;4)-alpha-Kdo-(2-&gt;6)-lipid IVA + CMP + H(+). The catalysed reaction is alpha-Kdo-(2-&gt;4)-alpha-Kdo-(2-&gt;6)-lipid IVA (E. coli) + CMP-3-deoxy-beta-D-manno-octulosonate = alpha-Kdo-(2-&gt;4)-alpha-Kdo-(2-&gt;4)-alpha-Kdo-(2-&gt;6)-lipid IVA + CMP + H(+). Its pathway is bacterial outer membrane biogenesis; LPS core biosynthesis. It functions in the pathway bacterial outer membrane biogenesis; LOS core biosynthesis. Functionally, involved in the biosynthesis of the core oligosaccharide region of lipopolysaccharide (LPS). Required for the addition of 3-deoxy-D-manno-oct-2-ulosonic acid III (KdoIII) to the KdoII residue of the inner lipopolysaccharide core. May also play a role in a lipooligosaccharide (LOS) biosynthesis pathway. The protein is Probable 3-deoxy-manno-octulosonic acid transferase of Escherichia coli (strain K12).